The chain runs to 1004 residues: Unconventional myosin-Id (1004 aa).

The Myosin motor domain maps to 9 to 695 (FGKADFVLLD…TIFSLEEQRA (687 aa)). 102-109 (GESGAGKT) contacts ATP. The segment at 572-594 (MISLVEKLASKEPYYVRCIKPND) is actin-binding. 2 IQ domains span residues 699–719 (KRIV…MRYR) and 721–741 (MRAA…SYIR). The 192-residue stretch at 812 to 1003 (GQRADLGLQR…RSGYILSVPG (192 aa)) folds into the TH1 domain.

It belongs to the TRAFAC class myosin-kinesin ATPase superfamily. Myosin family. Interacts (via the two IQ motifs) with calmodulin. Interacts with F-actin.

It localises to the cytoplasm. The protein resides in the perikaryon. The protein localises to the cell projection. It is found in the dendrite. Its subcellular location is the early endosome. It localises to the cell cortex. Functionally, unconventional myosin that functions as actin-based motor protein with ATPase activity. Plays a role in the formation of Kupffer's vesicle, an organ that functions as a left-right organizer during embryogenesis. Plays a role in vesicular trafficking events that are required for normal lumen expansion of Kupffer's vesicle. Required for normal orientation of cilia in Kupffer's vesicle, and thus for normal, unidirectional circular flow and normal angular flow velocity, which then mediates asymmetric gene expression and left-right asymmetric development. Plays a role in endosomal protein trafficking, and especially in the transfer of cargo proteins from early to recycling endosomes. Required for normal planar cell polarity in ciliated cells, for normal rotational polarity of cilia, and for coordinated, unidirectional ciliary movement. This chain is Unconventional myosin-Id (myo1d), found in Danio rerio (Zebrafish).